The following is an 852-amino-acid chain: Homeobox-leucine zipper protein ATHB-14 (852 aa).

Positions 1 to 25 are disordered; that stretch reads MMMVHSMSRDMMNRESPDKGLDSGK. Residues 7–22 show a composition bias toward basic and acidic residues; the sequence is MSRDMMNRESPDKGLD. A DNA-binding region (homeobox) is located at residues 22–85; it reads DSGKYVRYTP…NRRCREKQRK (64 aa). A coiled-coil region spans residues 80–122; the sequence is REKQRKEAARLQTVNRKLNAMNKLLMEENDRLQKQVSNLVYEN. Positions 80 to 130 are ZIP domain; that stretch reads REKQRKEAARLQTVNRKLNAMNKLLMEENDRLQKQVSNLVYENGHMKHQLH. A compositionally biased stretch (polar residues) spans 130 to 148; the sequence is HTASGTTTDNSCESVVVSG. Positions 130–166 are disordered; it reads HTASGTTTDNSCESVVVSGQQHQQQNPNPQHQQRDAN. Positions 149-160 are enriched in low complexity; that stretch reads QQHQQQNPNPQH. Residues 164–392 form the START domain; that stretch reads DANNPAGLLS…IAQETSGEVQ (229 aa).

It belongs to the HD-ZIP homeobox family. Class III subfamily. In terms of assembly, homodimer. Heterodimer with ZPR3. Interacts with ESR1 and ESR2. Interacts with ZPR3. Expressed in the center of the meristem and on the adaxial side of the leaves.

The protein resides in the nucleus. With respect to regulation, inhibited by ZPR3. In terms of biological role, probable transcription factor involved in the determination of adaxial-abaxial polarity in ovule primordium. Specifies adaxial leaf fates. In Arabidopsis thaliana (Mouse-ear cress), this protein is Homeobox-leucine zipper protein ATHB-14 (ATHB-14).